The sequence spans 435 residues: Glutamate-1-semialdehyde 2,1-aminomutase (435 aa).

K270 carries the post-translational modification N6-(pyridoxal phosphate)lysine.

Belongs to the class-III pyridoxal-phosphate-dependent aminotransferase family. HemL subfamily. Homodimer. It depends on pyridoxal 5'-phosphate as a cofactor.

It is found in the cytoplasm. It carries out the reaction (S)-4-amino-5-oxopentanoate = 5-aminolevulinate. Its pathway is porphyrin-containing compound metabolism; protoporphyrin-IX biosynthesis; 5-aminolevulinate from L-glutamyl-tRNA(Glu): step 2/2. The polypeptide is Glutamate-1-semialdehyde 2,1-aminomutase (Wigglesworthia glossinidia brevipalpis).